Consider the following 303-residue polypeptide: ADP-ribosyl cyclase/cyclic ADP-ribose hydrolase 1 (303 aa).

Over 1-21 the chain is Cytoplasmic; the sequence is MANYEFSQVSEDRPGCRLTRK. A helical; Signal-anchor for type II membrane protein membrane pass occupies residues 22 to 44; it reads AQIGLGVGLLLLVALVVVVVIVL. The Extracellular segment spans residues 45–303; that stretch reads WPRSPLVWKG…PEHPSCRLNV (259 aa). Cystine bridges form between Cys-69-Cys-85, Cys-102-Cys-183, and Cys-163-Cys-176. Asn-103 is a glycosylation site (N-linked (GlcNAc...) asparagine). The active site involves Cys-122. Asn-123 is a glycosylation site (N-linked (GlcNAc...) asparagine). Cys-204 is an active-site residue. Residues Asn-212 and Asn-222 are each glycosylated (N-linked (GlcNAc...) asparagine). Disulfide bonds link Cys-257–Cys-278 and Cys-290–Cys-299.

The protein belongs to the ADP-ribosyl cyclase family. Homodimer. Spleen, liver, heart, thymus, thyroid gland, ileum, colon, cerebellum, salivary gland, adrenal gland, jejunum, islets of Langerhans and osteoclasts.

It localises to the cell membrane. The enzyme catalyses NAD(+) = cyclic ADP-beta-D-ribose + nicotinamide + H(+). It carries out the reaction nicotinate + NADP(+) = nicotinate-adenine dinucleotide phosphate + nicotinamide. The catalysed reaction is NAD(+) + H2O = ADP-D-ribose + nicotinamide + H(+). With respect to regulation, both NAADP and cADPR synthesis are inhibited by nicotinic acid. Its function is as follows. Synthesizes the second messengers cyclic ADP-ribose and nicotinate-adenine dinucleotide phosphate, the former a second messenger for glucose-induced insulin secretion, the latter a Ca(2+) mobilizer. Also has cADPR hydrolase activity. Regulates osteoclastic bone resorption, probably via production of cyclic ADP-ribose and triggering of a cytosolic calcium ion signal through ryanodine receptor activation. This is ADP-ribosyl cyclase/cyclic ADP-ribose hydrolase 1 (Cd38) from Rattus norvegicus (Rat).